Here is a 106-residue protein sequence, read N- to C-terminus: Large ribosomal subunit protein bL21 (106 aa).

Belongs to the bacterial ribosomal protein bL21 family. Part of the 50S ribosomal subunit. Contacts protein L20.

Its function is as follows. This protein binds to 23S rRNA in the presence of protein L20. In Streptomyces coelicolor (strain ATCC BAA-471 / A3(2) / M145), this protein is Large ribosomal subunit protein bL21.